An 87-amino-acid chain; its full sequence is Envelope glycoprotein N (87 aa).

An N-terminal signal peptide occupies residues 1-24 (MGSITASFILITMQILFFCEDSSG). Over 25–48 (EPNFAERNFWHASCSARGVYIDGS) the chain is Virion surface. A helical membrane pass occupies residues 49 to 69 (MITTLFFYASLLGVCVALISL). The Intravirion portion of the chain corresponds to 70 to 87 (AYHACFRLFTRSVLRSTW).

This sequence belongs to the herpesviridae glycoprotein N family. Interacts (via N-terminus) with gM (via N-terminus). The gM-gN heterodimer forms the gCII complex.

It localises to the virion membrane. Its subcellular location is the host membrane. It is found in the host Golgi apparatus. The protein localises to the host trans-Golgi network. Its function is as follows. Envelope glycoprotein necessary for proper maturation of gM and modulation of its membrane fusion activity. Also plays a critical role in virion morphogenesis. The protein is Envelope glycoprotein N of Varicella-zoster virus (strain Dumas) (HHV-3).